Here is a 604-residue protein sequence, read N- to C-terminus: Probable translation initiation factor IF-2 (604 aa).

The region spanning 18–232 is the tr-type G domain; sequence IRTPIVCVLG…VLIGLAQRYM (215 aa). The tract at residues 27-34 is G1; the sequence is GHVDHGKT. Residue 27 to 34 participates in GTP binding; sequence GHVDHGKT. The tract at residues 52-56 is G2; sequence AITQH. The tract at residues 88 to 91 is G3; sequence DTPG. Residues 88-92 and 142-145 each bind GTP; these read DTPGH and TKLD. Residues 142–145 form a G4 region; that stretch reads TKLD. The tract at residues 210–212 is G5; it reads SAH.

This sequence belongs to the TRAFAC class translation factor GTPase superfamily. Classic translation factor GTPase family. IF-2 subfamily.

In terms of biological role, function in general translation initiation by promoting the binding of the formylmethionine-tRNA to ribosomes. Seems to function along with eIF-2. The protein is Probable translation initiation factor IF-2 of Methanospirillum hungatei JF-1 (strain ATCC 27890 / DSM 864 / NBRC 100397 / JF-1).